The chain runs to 783 residues: E3 UFM1-protein ligase 1 homolog (783 aa).

Residues 404-482 are disordered; that stretch reads SNSSANFDAD…AGSSRKSVKP (79 aa). Residues 445-457 are compositionally biased toward basic residues; that stretch reads KSTKKHQRGRAAA.

It belongs to the UFL1 family.

Its function is as follows. E3 UFM1-protein ligase that mediates ufmylation of target proteins. This Drosophila mojavensis (Fruit fly) protein is E3 UFM1-protein ligase 1 homolog.